Consider the following 182-residue polypeptide: uncharacterized protein (182 aa).

The Nudix hydrolase domain occupies 36-164 (LRHRATYIVV…TPDSLKALSL (129 aa)). The Nudix box signature appears at 73–95 (GGVVQSGENYLESARREAEEELG). Residues glutamate 89 and glutamate 93 each coordinate Mg(2+).

This sequence belongs to the Nudix hydrolase family. Mg(2+) serves as cofactor.

This is an uncharacterized protein from Yersinia pestis.